The following is a 272-amino-acid chain: Protein UL11 (272 aa).

The first 31 residues, 1 to 31 (MLFRYITFHREKVLYLTAACIFGVYISLHDA), serve as a signal peptide directing secretion. Residues 32–224 (CIPVVGKIGT…PLQPSPQHQH (193 aa)) are Extracellular-facing. N-linked (GlcNAc...) asparagine; by host glycosylation is found at Asn42, Asn93, Asn100, and Asn142. A disordered region spans residues 142 to 200 (NGTFPTTTTKKPTTTTRTTTTTTQRTTTTRTTTTAKKTTISTTHHKHPSPKKSTTPNSH). Residues 147 to 183 (TTTTKKPTTTTRTTTTTTQRTTTTRTTTTAKKTTIST) show a composition bias toward low complexity. A helical membrane pass occupies residues 225–245 (LATHALWVLAVVIVIIIIIIF). The Cytoplasmic segment spans residues 246–272 (YFRIPQKLWLLWQHDKHGIVLIPQTDL).

The protein belongs to the RL11 family. As to quaternary structure, interacts with host PTPRC; this interaction affects T-cell signaling. Post-translationally, glycosylated.

Its subcellular location is the host cell membrane. It localises to the host endoplasmic reticulum. Its function is as follows. Plays a role in the modulation of host immune response by modulating T-cell function. Interacts with host PTPRC/CD45 and thereby reduces host TCR signaling and T-cell proliferation. This Human cytomegalovirus (strain Merlin) (HHV-5) protein is Protein UL11 (UL11).